The sequence spans 346 residues: 3-keto-steroid reductase ERG27 (346 aa).

NADP(+) contacts are provided by L19, T42, and K48. Residues S182 and Y205 each act as proton donor in the active site. NADP(+) contacts are provided by Y205, K209, and S241. K209 functions as the Lowers pKa of active site Tyr in the catalytic mechanism. The chain crosses the membrane as a helical span at residues F242 to L262. N-linked (GlcNAc...) asparagine glycosylation occurs at N272.

It belongs to the short-chain dehydrogenases/reductases (SDR) family. ERG27 subfamily. In terms of assembly, heterotetramer of ERG25, ERG26, ERG27 and ERG28. ERG28 acts as a scaffold to tether ERG27 and other 4,4-demethylation-related enzymes, forming a demethylation enzyme complex, in the endoplasmic reticulum. Interacts with ERG25 and ERG28. Also interacts with ERG7, but only in lipid particles.

The protein localises to the endoplasmic reticulum membrane. It localises to the lipid droplet. The enzyme catalyses 3-dehydro-4alpha-methylzymosterol + NADPH + H(+) = 4alpha-methylzymosterol + NADP(+). The protein operates within steroid biosynthesis; zymosterol biosynthesis; zymosterol from lanosterol: step 5/6. Functionally, 3-keto-steroid reductase; part of the third module of ergosterol biosynthesis pathway that includes the late steps of the pathway. ERG27 is a catalytic component of the C-4 demethylation complex that catalyzes the reduction of the keto group on the C-3. The third module or late pathway involves the ergosterol synthesis itself through consecutive reactions that mainly occur in the endoplasmic reticulum (ER) membrane. Firstly, the squalene synthase ERG9 catalyzes the condensation of 2 farnesyl pyrophosphate moieties to form squalene, which is the precursor of all steroids. Squalene synthase is crucial for balancing the incorporation of farnesyl diphosphate (FPP) into sterol and nonsterol isoprene synthesis. Secondly, the squalene epoxidase ERG1 catalyzes the stereospecific oxidation of squalene to (S)-2,3-epoxysqualene, which is considered to be a rate-limiting enzyme in steroid biosynthesis. Then, the lanosterol synthase ERG7 catalyzes the cyclization of (S)-2,3 oxidosqualene to lanosterol, a reaction that forms the sterol core. In the next steps, lanosterol is transformed to zymosterol through a complex process involving various demethylation, reduction and desaturation reactions. The lanosterol 14-alpha-demethylase ERG11 (also known as CYP51) catalyzes C14-demethylation of lanosterol to produce 4,4'-dimethyl cholesta-8,14,24-triene-3-beta-ol, which is critical for ergosterol biosynthesis. The C-14 reductase ERG24 reduces the C14=C15 double bond of 4,4-dimethyl-cholesta-8,14,24-trienol to produce 4,4-dimethyl-cholesta-8,24-dienol. 4,4-dimethyl-cholesta-8,24-dienol is substrate of the C-4 demethylation complex ERG25-ERG26-ERG27 in which ERG25 catalyzes the three-step monooxygenation required for the demethylation of 4,4-dimethyl and 4alpha-methylsterols, ERG26 catalyzes the oxidative decarboxylation that results in a reduction of the 3-beta-hydroxy group at the C-3 carbon to an oxo group, and ERG27 is responsible for the reduction of the keto group on the C-3. ERG28 has a role as a scaffold to help anchor ERG25, ERG26 and ERG27 to the endoplasmic reticulum and ERG29 regulates the activity of the iron-containing C4-methylsterol oxidase ERG25. Then, the sterol 24-C-methyltransferase ERG6 catalyzes the methyl transfer from S-adenosyl-methionine to the C-24 of zymosterol to form fecosterol. The C-8 sterol isomerase ERG2 catalyzes the reaction which results in unsaturation at C-7 in the B ring of sterols and thus converts fecosterol to episterol. The sterol-C5-desaturase ERG3 then catalyzes the introduction of a C-5 double bond in the B ring to produce 5-dehydroepisterol. The C-22 sterol desaturase ERG5 further converts 5-dehydroepisterol into ergosta-5,7,22,24(28)-tetraen-3beta-ol by forming the C-22(23) double bond in the sterol side chain. Finally, ergosta-5,7,22,24(28)-tetraen-3beta-ol is substrate of the C-24(28) sterol reductase ERG4 to produce ergosterol. Its function is as follows. Facilitates the association of ERG7 with lipid particles preventing its digestion in the endoplasmic reticulum and the lipid particles. In Candida albicans (Yeast), this protein is 3-keto-steroid reductase ERG27.